The chain runs to 198 residues: Protein C4 (198 aa).

The tract at residues 1 to 36 is disordered; it reads MFNPRHPGGEFFGRKHHRRHAPDGRSSSSSSSSSEC.

This Giardia intestinalis (Giardia lamblia) protein is Protein C4 (C4).